Reading from the N-terminus, the 101-residue chain is Small ribosomal subunit protein uS14 (101 aa).

Residues 1 to 10 are compositionally biased toward basic and acidic residues; it reads MAKKSSVEKN. A disordered region spans residues 1 to 23; the sequence is MAKKSSVEKNNRRKRMAKNAAPK. Over residues 11–23 the composition is skewed to basic residues; sequence NRRKRMAKNAAPK.

It belongs to the universal ribosomal protein uS14 family. As to quaternary structure, part of the 30S ribosomal subunit. Contacts proteins S3 and S10.

In terms of biological role, binds 16S rRNA, required for the assembly of 30S particles and may also be responsible for determining the conformation of the 16S rRNA at the A site. The polypeptide is Small ribosomal subunit protein uS14 (Bradyrhizobium sp. (strain BTAi1 / ATCC BAA-1182)).